A 259-amino-acid chain; its full sequence is Phosphatidylglycerol--prolipoprotein diacylglyceryl transferase (259 aa).

Transmembrane regions (helical) follow at residues 9–29 (LGPL…ILAV), 48–68 (DFIL…YVIF), 83–103 (IWHG…VLFI), 114–133 (DFLD…GRWG), 167–187 (TPTF…IMIL), 197–217 (GEVA…IEGM), and 227–247 (LRVS…LIVI). R131 lines the a 1,2-diacyl-sn-glycero-3-phospho-(1'-sn-glycerol) pocket.

The protein belongs to the Lgt family.

It localises to the cell membrane. The enzyme catalyses L-cysteinyl-[prolipoprotein] + a 1,2-diacyl-sn-glycero-3-phospho-(1'-sn-glycerol) = an S-1,2-diacyl-sn-glyceryl-L-cysteinyl-[prolipoprotein] + sn-glycerol 1-phosphate + H(+). It participates in protein modification; lipoprotein biosynthesis (diacylglyceryl transfer). Its function is as follows. Catalyzes the transfer of the diacylglyceryl group from phosphatidylglycerol to the sulfhydryl group of the N-terminal cysteine of a prolipoprotein, the first step in the formation of mature lipoproteins. The chain is Phosphatidylglycerol--prolipoprotein diacylglyceryl transferase from Streptococcus mutans serotype c (strain ATCC 700610 / UA159).